The sequence spans 378 residues: Histidinol-phosphate aminotransferase 2 (378 aa).

Lys240 is modified (N6-(pyridoxal phosphate)lysine).

The protein belongs to the class-II pyridoxal-phosphate-dependent aminotransferase family. Histidinol-phosphate aminotransferase subfamily. In terms of assembly, homodimer. Requires pyridoxal 5'-phosphate as cofactor.

It carries out the reaction L-histidinol phosphate + 2-oxoglutarate = 3-(imidazol-4-yl)-2-oxopropyl phosphate + L-glutamate. The protein operates within amino-acid biosynthesis; L-histidine biosynthesis; L-histidine from 5-phospho-alpha-D-ribose 1-diphosphate: step 7/9. This chain is Histidinol-phosphate aminotransferase 2 (hisC2), found in Caulobacter vibrioides (strain ATCC 19089 / CIP 103742 / CB 15) (Caulobacter crescentus).